Consider the following 208-residue polypeptide: High frequency lysogenization protein HflD homolog (208 aa).

Belongs to the HflD family.

The protein resides in the cytoplasm. It localises to the cell inner membrane. In Pseudomonas entomophila (strain L48), this protein is High frequency lysogenization protein HflD homolog.